Here is a 754-residue protein sequence, read N- to C-terminus: Subtilisin-like protease SBT3.12 (754 aa).

A signal peptide spans 1 to 28; that stretch reads MGIVKGRSRAGLFIGFLFIVNVGFCVFA. A propeptide spans 29–117 (activation peptide); the sequence is QESSNEERKI…VAPNRKVELQ (89 aa). The Inhibitor I9 domain maps to 39–116; sequence YVVHLGVRRH…SVAPNRKVEL (78 aa). Positions 121–606 constitute a Peptidase S8 domain; that stretch reads IYDYLGLSPS…AGLVNAERAK (486 aa). The Charge relay system role is filled by aspartate 151. A glycan (N-linked (GlcNAc...) asparagine) is linked at asparagine 206. Histidine 224 (charge relay system) is an active-site residue. Asparagine 239 and asparagine 369 each carry an N-linked (GlcNAc...) asparagine glycan. Serine 537 acts as the Charge relay system in catalysis. Asparagine 629 and asparagine 740 each carry an N-linked (GlcNAc...) asparagine glycan.

Belongs to the peptidase S8 family.

Its subcellular location is the secreted. This Arabidopsis thaliana (Mouse-ear cress) protein is Subtilisin-like protease SBT3.12.